Consider the following 431-residue polypeptide: Phosphoribosylamine--glycine ligase (431 aa).

In terms of domain architecture, ATP-grasp spans 107-315; the sequence is RWLMEEYKIP…LVEIGEEIVD (209 aa). 134-193 is an ATP binding site; that stretch reads IDDFGRPVVVKPLGLTGGKGVKVVGYQLKDNEEAKAYAEELIKRDGKVLIEERTDGVEFT. Gln-273, Glu-285, and Asn-287 together coordinate Mg(2+). Residues Gln-273, Glu-285, and Asn-287 each coordinate Mn(2+).

Belongs to the GARS family. Mg(2+) is required as a cofactor. The cofactor is Mn(2+).

It catalyses the reaction 5-phospho-beta-D-ribosylamine + glycine + ATP = N(1)-(5-phospho-beta-D-ribosyl)glycinamide + ADP + phosphate + H(+). It participates in purine metabolism; IMP biosynthesis via de novo pathway; N(1)-(5-phospho-D-ribosyl)glycinamide from 5-phospho-alpha-D-ribose 1-diphosphate: step 2/2. The sequence is that of Phosphoribosylamine--glycine ligase from Thermococcus kodakarensis (strain ATCC BAA-918 / JCM 12380 / KOD1) (Pyrococcus kodakaraensis (strain KOD1)).